We begin with the raw amino-acid sequence, 223 residues long: dITP/XTP pyrophosphatase (223 aa).

9–14 contributes to the substrate binding site; that stretch reads TTNQNK. Catalysis depends on D71, which acts as the Proton acceptor. D71 serves as a coordination point for Mg(2+). Substrate contacts are provided by residues S72, 152–155, K175, and 180–181; these read FGYD and HR. Positions 203–223 are disordered; that stretch reads LSEEKPAKPDHSEFEGNDWSK.

It belongs to the HAM1 NTPase family. Homodimer. The cofactor is Mg(2+).

The catalysed reaction is XTP + H2O = XMP + diphosphate + H(+). It catalyses the reaction dITP + H2O = dIMP + diphosphate + H(+). It carries out the reaction ITP + H2O = IMP + diphosphate + H(+). Functionally, pyrophosphatase that catalyzes the hydrolysis of nucleoside triphosphates to their monophosphate derivatives, with a high preference for the non-canonical purine nucleotides XTP (xanthosine triphosphate), dITP (deoxyinosine triphosphate) and ITP. Seems to function as a house-cleaning enzyme that removes non-canonical purine nucleotides from the nucleotide pool, thus preventing their incorporation into DNA/RNA and avoiding chromosomal lesions. This chain is dITP/XTP pyrophosphatase, found in Desulfotalea psychrophila (strain LSv54 / DSM 12343).